We begin with the raw amino-acid sequence, 338 residues long: Glutamyl-tRNA reductase (338 aa).

Substrate contacts are provided by residues 50-53 (TCHR), Ser-102, 107-109 (ETE), and Gln-113. Cys-51 acts as the Nucleophile in catalysis. 181–186 (GYSDIN) serves as a coordination point for NADP(+).

It belongs to the glutamyl-tRNA reductase family. As to quaternary structure, homodimer.

It catalyses the reaction (S)-4-amino-5-oxopentanoate + tRNA(Glu) + NADP(+) = L-glutamyl-tRNA(Glu) + NADPH + H(+). It participates in porphyrin-containing compound metabolism; protoporphyrin-IX biosynthesis; 5-aminolevulinate from L-glutamyl-tRNA(Glu): step 1/2. Functionally, catalyzes the NADPH-dependent reduction of glutamyl-tRNA(Glu) to glutamate 1-semialdehyde (GSA). In Chlamydia caviae (strain ATCC VR-813 / DSM 19441 / 03DC25 / GPIC) (Chlamydophila caviae), this protein is Glutamyl-tRNA reductase.